The sequence spans 586 residues: Phosphomethylpyrimidine synthase (586 aa).

A disordered region spans residues Met-1–Pro-59. Basic and acidic residues predominate over residues Val-22–Glu-39. Residues Asn-193, Met-222, Tyr-251, His-287, Ser-307 to Gly-309, Asp-348 to Arg-351, and Glu-387 each bind substrate. His-391 provides a ligand contact to Zn(2+). Position 414 (Tyr-414) interacts with substrate. His-455 lines the Zn(2+) pocket. Positions 535, 538, and 543 each coordinate [4Fe-4S] cluster.

Belongs to the ThiC family. [4Fe-4S] cluster serves as cofactor.

It carries out the reaction 5-amino-1-(5-phospho-beta-D-ribosyl)imidazole + S-adenosyl-L-methionine = 4-amino-2-methyl-5-(phosphooxymethyl)pyrimidine + CO + 5'-deoxyadenosine + formate + L-methionine + 3 H(+). Its pathway is cofactor biosynthesis; thiamine diphosphate biosynthesis. Catalyzes the synthesis of the hydroxymethylpyrimidine phosphate (HMP-P) moiety of thiamine from aminoimidazole ribotide (AIR) in a radical S-adenosyl-L-methionine (SAM)-dependent reaction. This Bacillus cereus (strain ATCC 14579 / DSM 31 / CCUG 7414 / JCM 2152 / NBRC 15305 / NCIMB 9373 / NCTC 2599 / NRRL B-3711) protein is Phosphomethylpyrimidine synthase.